Consider the following 122-residue polypeptide: Small ribosomal subunit protein uS13 (122 aa).

Residues R93–K122 form a disordered region.

Belongs to the universal ribosomal protein uS13 family. As to quaternary structure, part of the 30S ribosomal subunit. Forms a loose heterodimer with protein S19. Forms two bridges to the 50S subunit in the 70S ribosome.

Its function is as follows. Located at the top of the head of the 30S subunit, it contacts several helices of the 16S rRNA. In the 70S ribosome it contacts the 23S rRNA (bridge B1a) and protein L5 of the 50S subunit (bridge B1b), connecting the 2 subunits; these bridges are implicated in subunit movement. Contacts the tRNAs in the A and P-sites. The polypeptide is Small ribosomal subunit protein uS13 (Clostridium beijerinckii (strain ATCC 51743 / NCIMB 8052) (Clostridium acetobutylicum)).